Here is a 285-residue protein sequence, read N- to C-terminus: MATNEMWYETLHTGFGQYFSVDKIIYREKTDHQDLVIFENAALGRVMALDGVVQTTERDEFIYHEMMTHVPLLAHGAPKRVLIIGGGDGAMLREVCRHKNIEQITMVEIDAGVVTFCRQYLPNHNAGAYDDARFKLVIDDGVNFVNQTSDKFDVIISDCTDPIGPGESLFTSEFYQGCRRCLNQDGIFVAQNGVCFLQQDEAVNSHRKLSHYFGDVSFYQAAIPTYYGGIMTFAWASDNPALRQLDMATLTARFSEAGLNCRYYNPAIHTGSFALPQYLLNALAD.

One can recognise a PABS domain in the interval 5 to 238 (EMWYETLHTG…GIMTFAWASD (234 aa)). Gln33 is an S-methyl-5'-thioadenosine binding site. Residues His64 and Asp88 each coordinate spermidine. S-methyl-5'-thioadenosine-binding positions include Glu108 and 140–141 (DG). Asp158 (proton acceptor) is an active-site residue. A spermidine-binding site is contributed by 158 to 161 (DCTD). Residue Pro165 coordinates S-methyl-5'-thioadenosine.

The protein belongs to the spermidine/spermine synthase family. In terms of assembly, homodimer or homotetramer.

The protein resides in the cytoplasm. The catalysed reaction is S-adenosyl 3-(methylsulfanyl)propylamine + putrescine = S-methyl-5'-thioadenosine + spermidine + H(+). It participates in amine and polyamine biosynthesis; spermidine biosynthesis; spermidine from putrescine: step 1/1. Functionally, catalyzes the irreversible transfer of a propylamine group from the amino donor S-adenosylmethioninamine (decarboxy-AdoMet) to putrescine (1,4-diaminobutane) to yield spermidine. The chain is Polyamine aminopropyltransferase from Erwinia tasmaniensis (strain DSM 17950 / CFBP 7177 / CIP 109463 / NCPPB 4357 / Et1/99).